We begin with the raw amino-acid sequence, 1722 residues long: Signal-induced proliferation-associated 1-like protein 2 (1722 aa).

2 disordered regions span residues 1-29 and 45-73; these read MSDP…RAMQ and MGPA…PAVP. A compositionally biased stretch (gly residues) spans 57 to 66; it reads EGGGGGGGPA. Ser-149, Ser-380, and Ser-384 each carry phosphoserine. A disordered region spans residues 362–404; sequence ASAASQTPVPVGPAGGCESPLGSKEDLNAKENPDADEGDGKSN. Residues 384 to 403 show a composition bias toward basic and acidic residues; it reads SKEDLNAKENPDADEGDGKS. Residues 596–813 form the Rap-GAP domain; the sequence is LLKLDEQGLS…RTRHEYLKDL (218 aa). One can recognise a PDZ domain in the interval 951-1027; that stretch reads EMTLRRNGLG…VKVVIIQPHE (77 aa). Ser-1030 is modified (phosphoserine). Disordered regions lie at residues 1068–1172, 1197–1246, and 1328–1361; these read HRVP…DHED, ERAL…FGSG, and AADG…KSTG. Composition is skewed to low complexity over residues 1091-1103 and 1120-1131; these read LQCQ…AQAA and SSPSNQSSSSDP. Over residues 1197–1218 the composition is skewed to basic and acidic residues; sequence ERALQKDGSCKDSPNKLSHIGD. Over residues 1220 to 1237 the composition is skewed to low complexity; sequence SCSSHSSSNTLSSNTSSN. A Phosphoserine modification is found at Ser-1245. Residues 1328–1355 show a composition bias toward low complexity; it reads AADGSMGDLSEVSSHSSGSHRSGSPSTH. Ser-1461, Ser-1472, Ser-1478, Ser-1488, Ser-1549, Ser-1552, and Ser-1591 each carry phosphoserine. Residues 1652-1712 adopt a coiled-coil conformation; that stretch reads STLTGKVNQL…ATAQLRTFTE (61 aa).

This Rattus norvegicus (Rat) protein is Signal-induced proliferation-associated 1-like protein 2 (Sipa1l2).